The primary structure comprises 71 residues: Protein SlyX homolog (71 aa).

It belongs to the SlyX family.

In Rhodospirillum rubrum (strain ATCC 11170 / ATH 1.1.1 / DSM 467 / LMG 4362 / NCIMB 8255 / S1), this protein is Protein SlyX homolog.